We begin with the raw amino-acid sequence, 760 residues long: 5-methyltetrahydropteroyltriglutamate--homocysteine methyltransferase (760 aa).

5-methyltetrahydropteroyltri-L-glutamate is bound by residues 24 to 27 and K118; that span reads RELK. Residues 437-439 and E490 contribute to the L-homocysteine site; that span reads IGS. L-methionine is bound by residues 437-439 and E490; that span reads IGS. 5-methyltetrahydropteroyltri-L-glutamate is bound by residues 521-522 and W567; that span reads RC. L-homocysteine is bound at residue D605. D605 contacts L-methionine. E611 is a 5-methyltetrahydropteroyltri-L-glutamate binding site. The Zn(2+) site is built by H647, C649, and E671. H700 serves as the catalytic Proton donor. C732 contributes to the Zn(2+) binding site.

The protein belongs to the vitamin-B12 independent methionine synthase family. Zn(2+) serves as cofactor.

The catalysed reaction is 5-methyltetrahydropteroyltri-L-glutamate + L-homocysteine = tetrahydropteroyltri-L-glutamate + L-methionine. It participates in amino-acid biosynthesis; L-methionine biosynthesis via de novo pathway; L-methionine from L-homocysteine (MetE route): step 1/1. Its function is as follows. Catalyzes the transfer of a methyl group from 5-methyltetrahydrofolate to homocysteine resulting in methionine formation. The protein is 5-methyltetrahydropteroyltriglutamate--homocysteine methyltransferase of Mycobacterium leprae (strain TN).